Here is a 603-residue protein sequence, read N- to C-terminus: MTDVPVSRIRNFSIIAHIDHGKSTLADRLLQDTGTVQQRQMKEQFLDNMDLERERGITIKLQAARMNYTAKDGEKYVLNLIDTPGHVDFSYEVSRSLAACEGALLVVDSSQGVEAQTLANVYLALDNNLEIIPILNKIDLPGSEPERVANEIEEVVGLDCSNIIKASAKAGIGIDEILESIVHLVPPPQDTVDQPLRALIFDSYYDAYRGVIVYFRVMDGQVKKGDRVRLMASGKEYEIDELGILSPNQIPIDSLHAGEVGYFAAAIKTVEDARVGDTITLAEKPAKEPLPGYTEANPMVFCGLFPTDADQYEDLREALEKLKLNDAALSYEPETSTAMGFGFRCGFLGLLHMEIVQERLEREYNLDLITTAPSVVYRVTTVDGEVTEIDNPSLLPPPQKREKIEEPYIQVEMITPETYVGTLMELCQSRRGVFKDMRYFTLSRTAVVYELPLAEVVTDFFDQLKSRSRGYASMEYHLIGYRENPLVKLDILVNGDSVDALAMIVHRDKAYYVGRALTEKLKELIPRHQFKVPIQAAIGSKVIASEHIPALRKDVLAKCYGGDISRKKKLLQKQAKGKKRMKSIGTVDVPQEAFMAVLKLDPQ.

Residues 7–189 form the tr-type G domain; that stretch reads SRIRNFSIIA…SIVHLVPPPQ (183 aa). Residues 19–24 and 136–139 each bind GTP; these read DHGKST and NKID.

Belongs to the TRAFAC class translation factor GTPase superfamily. Classic translation factor GTPase family. LepA subfamily.

It is found in the cell inner membrane. The enzyme catalyses GTP + H2O = GDP + phosphate + H(+). In terms of biological role, required for accurate and efficient protein synthesis under certain stress conditions. May act as a fidelity factor of the translation reaction, by catalyzing a one-codon backward translocation of tRNAs on improperly translocated ribosomes. Back-translocation proceeds from a post-translocation (POST) complex to a pre-translocation (PRE) complex, thus giving elongation factor G a second chance to translocate the tRNAs correctly. Binds to ribosomes in a GTP-dependent manner. In Rippkaea orientalis (strain PCC 8801 / RF-1) (Cyanothece sp. (strain PCC 8801)), this protein is Elongation factor 4.